Consider the following 202-residue polypeptide: Imidazoleglycerol-phosphate dehydratase (202 aa).

It belongs to the imidazoleglycerol-phosphate dehydratase family.

It is found in the cytoplasm. The catalysed reaction is D-erythro-1-(imidazol-4-yl)glycerol 3-phosphate = 3-(imidazol-4-yl)-2-oxopropyl phosphate + H2O. It participates in amino-acid biosynthesis; L-histidine biosynthesis; L-histidine from 5-phospho-alpha-D-ribose 1-diphosphate: step 6/9. This Brucella suis (strain ATCC 23445 / NCTC 10510) protein is Imidazoleglycerol-phosphate dehydratase.